Here is a 381-residue protein sequence, read N- to C-terminus: Cytochrome b (381 aa).

4 consecutive transmembrane segments (helical) span residues 32–52 (GGSL…LLAM), 76–98 (MILR…LHVL), 113–133 (VWIS…IGYV), and 179–199 (FYSF…FHIA). The heme b site is built by histidine 82 and histidine 96. Residues histidine 183 and histidine 197 each contribute to the heme b site. Residue histidine 202 coordinates a ubiquinone. A run of 4 helical transmembrane segments spans residues 225–245 (FGAK…ILVF), 289–309 (AMGV…PFIG), 318–338 (ITEW…WLGG), and 345–365 (TSFV…VCQP).

It belongs to the cytochrome b family. The main subunits of complex b-c1 are: cytochrome b, cytochrome c1 and the Rieske protein. The cofactor is heme b.

It is found in the mitochondrion inner membrane. Its function is as follows. Component of the ubiquinol-cytochrome c reductase complex (complex III or cytochrome b-c1 complex) that is part of the mitochondrial respiratory chain. The b-c1 complex mediates electron transfer from ubiquinol to cytochrome c. Contributes to the generation of a proton gradient across the mitochondrial membrane that is then used for ATP synthesis. The chain is Cytochrome b (MT-CYB) from Chlamydomonas reinhardtii (Chlamydomonas smithii).